Consider the following 220-residue polypeptide: MOB kinase activator-like 3 (220 aa).

Residues Cys-83, Cys-88, His-165, and His-170 each contribute to the Zn(2+) site.

The protein belongs to the MOB1/phocein family.

This chain is MOB kinase activator-like 3 (Mob3), found in Drosophila melanogaster (Fruit fly).